An 817-amino-acid polypeptide reads, in one-letter code: Protein kintoun (817 aa).

Disordered regions lie at residues 233–259 (AESTARSPASPAPKAVQRPEPTEPRCS), 385–404 (AGAREESADSSGADHGRKSC), 410–445 (AGTAKAEGELVPEPEQDFGGDSVTPLGPGEGTTPEN), and 473–503 (VQTSEEQEGTCHDTSGSDMGGPGTESIKPLC). Residues 386-401 (GAREESADSSGADHGR) are compositionally biased toward basic and acidic residues. Phosphoserine is present on residues Ser-622 and Ser-631. Residues 653-692 (ECSDPDGLQGKEKGVKEECPLSEKENTEHSTTSTADSNSS) are disordered. Residues 661-680 (QGKEKGVKEECPLSEKENTE) show a composition bias toward basic and acidic residues. The segment covering 681 to 692 (HSTTSTADSNSS) has biased composition (polar residues).

This sequence belongs to the PIH1 family. Kintoun subfamily. Interacts with CFAP300. Interacts with DNAI2 and HSPA1A. Interacts with DNAAF4. Interacts with DNAAF6/PIH1D3.

It localises to the cytoplasm. Its subcellular location is the dynein axonemal particle. Functionally, required for cytoplasmic pre-assembly of axonemal dyneins, thereby playing a central role in motility in cilia and flagella. Involved in pre-assembly of dynein arm complexes in the cytoplasm before intraflagellar transport loads them for the ciliary compartment. This Rattus norvegicus (Rat) protein is Protein kintoun.